A 515-amino-acid chain; its full sequence is Bifunctional purine biosynthesis protein PurH (515 aa).

The region spanning 1–145 (MTKRALISVS…KNHASVTVVV (145 aa)) is the MGS-like domain.

It belongs to the PurH family.

It carries out the reaction (6R)-10-formyltetrahydrofolate + 5-amino-1-(5-phospho-beta-D-ribosyl)imidazole-4-carboxamide = 5-formamido-1-(5-phospho-D-ribosyl)imidazole-4-carboxamide + (6S)-5,6,7,8-tetrahydrofolate. The catalysed reaction is IMP + H2O = 5-formamido-1-(5-phospho-D-ribosyl)imidazole-4-carboxamide. It functions in the pathway purine metabolism; IMP biosynthesis via de novo pathway; 5-formamido-1-(5-phospho-D-ribosyl)imidazole-4-carboxamide from 5-amino-1-(5-phospho-D-ribosyl)imidazole-4-carboxamide (10-formyl THF route): step 1/1. Its pathway is purine metabolism; IMP biosynthesis via de novo pathway; IMP from 5-formamido-1-(5-phospho-D-ribosyl)imidazole-4-carboxamide: step 1/1. The protein is Bifunctional purine biosynthesis protein PurH of Streptococcus agalactiae serotype Ia (strain ATCC 27591 / A909 / CDC SS700).